Reading from the N-terminus, the 618-residue chain is Serine/threonine-protein kinase pkn1 (618 aa).

The Protein kinase domain occupies 15 to 381 (YKILCYLRKG…KEEVKPQPLF (367 aa)). Residues 21–29 (LRKGLWCQD) and lysine 44 contribute to the ATP site.

Belongs to the protein kinase superfamily. Ser/Thr protein kinase family. In terms of processing, autophosphorylated on serine and threonine residues.

The enzyme catalyses L-seryl-[protein] + ATP = O-phospho-L-seryl-[protein] + ADP + H(+). It carries out the reaction L-threonyl-[protein] + ATP = O-phospho-L-threonyl-[protein] + ADP + H(+). In terms of biological role, together with the serine/threonine kinase PknD, may play a role in the specific interactions with host proteins during intracellular growth. The protein is Serine/threonine-protein kinase pkn1 (pkn1) of Chlamydia caviae (strain ATCC VR-813 / DSM 19441 / 03DC25 / GPIC) (Chlamydophila caviae).